We begin with the raw amino-acid sequence, 106 residues long: Urease subunit beta (106 aa).

Belongs to the urease beta subunit family. As to quaternary structure, heterotrimer of UreA (gamma), UreB (beta) and UreC (alpha) subunits. Three heterotrimers associate to form the active enzyme.

It localises to the cytoplasm. The enzyme catalyses urea + 2 H2O + H(+) = hydrogencarbonate + 2 NH4(+). It participates in nitrogen metabolism; urea degradation; CO(2) and NH(3) from urea (urease route): step 1/1. The chain is Urease subunit beta from Prochlorococcus marinus (strain NATL1A).